Reading from the N-terminus, the 233-residue chain is Large ribosomal subunit protein uL1 (233 aa).

The protein belongs to the universal ribosomal protein uL1 family. In terms of assembly, part of the 50S ribosomal subunit.

Its function is as follows. Binds directly to 23S rRNA. The L1 stalk is quite mobile in the ribosome, and is involved in E site tRNA release. Protein L1 is also a translational repressor protein, it controls the translation of the L11 operon by binding to its mRNA. The sequence is that of Large ribosomal subunit protein uL1 from Shewanella sediminis (strain HAW-EB3).